The following is a 301-amino-acid chain: GTPase Era (301 aa).

One can recognise an Era-type G domain in the interval 7-175; that stretch reads YCGFIAIVGR…AAIVRKHLPE (169 aa). A G1 region spans residues 15–22; the sequence is GRPNVGKS. Position 15–22 (15–22) interacts with GTP; that stretch reads GRPNVGKS. A G2 region spans residues 41 to 45; the sequence is QTTRH. Positions 62–65 are G3; it reads DTPG. GTP contacts are provided by residues 62–66 and 124–127; these read DTPGL and NKVD. Residues 124 to 127 are G4; the sequence is NKVD. Residues 154 to 156 form a G5 region; it reads ISA. One can recognise a KH type-2 domain in the interval 206–283; sequence LGAELPYSVT…HLELWVKVKS (78 aa).

The protein belongs to the TRAFAC class TrmE-Era-EngA-EngB-Septin-like GTPase superfamily. Era GTPase family. As to quaternary structure, monomer.

The protein localises to the cytoplasm. The protein resides in the cell inner membrane. Functionally, an essential GTPase that binds both GDP and GTP, with rapid nucleotide exchange. Plays a role in 16S rRNA processing and 30S ribosomal subunit biogenesis and possibly also in cell cycle regulation and energy metabolism. The sequence is that of GTPase Era from Cronobacter sakazakii (strain ATCC BAA-894) (Enterobacter sakazakii).